A 496-amino-acid polypeptide reads, in one-letter code: Solute carrier family 2, facilitated glucose transporter member 3 (496 aa).

At 1 to 11 (MADKKKITASL) the chain is on the cytoplasmic side. The helical transmembrane segment at 12-33 (IYAVSVAAIGSLQFGYNTGVIN) threads the bilayer. Residues 34 to 65 (APEKIIQAFYNRTLSQRSGETISPELLTSLWS) are Extracellular-facing. An N-linked (GlcNAc...) asparagine glycan is attached at Asn-44. The helical transmembrane segment at 66–86 (LSVAIFSVGGMIGSFSVSLFF) threads the bilayer. Residues 87–91 (NRFGR) are Cytoplasmic-facing. The chain crosses the membrane as a helical span at residues 92-112 (RNSMLLVNVLAFAGGALMALS). The Extracellular portion of the chain corresponds to 113-119 (KIAKAVE). The helical transmembrane segment at 120–143 (MLIIGRFIIGLFCGLCTGFVPMYI) threads the bilayer. Topologically, residues 144–154 (SEVSPTSLRGA) are cytoplasmic. A helical membrane pass occupies residues 155–175 (FGTLNQLGIVVGILVAQIFGL). Gln-160 is a binding site for D-glucose. Topologically, residues 176–184 (EGIMGTEAL) are extracellular. The chain crosses the membrane as a helical span at residues 185–205 (WPLLLGFTIVPAVLQCVALLF). The Cytoplasmic portion of the chain corresponds to 206-270 (CPESPRFLLI…LFRSPNYRQP (65 aa)). The helical transmembrane segment at 271-291 (IIISITLQLSQQLSGINAVFY) threads the bilayer. The segment at 278 to 280 (QLS) is important for selectivity against fructose. D-glucose contacts are provided by residues 281–282 (QQ) and Asn-287. Residues 292–305 (YSTGIFERAGITQP) are Extracellular-facing. Residues 306–326 (VYATIGAGVVNTVFTVVSLFL) traverse the membrane as a helical segment. Residue Asn-316 coordinates D-glucose. The Cytoplasmic segment spans residues 327–332 (VERAGR). The chain crosses the membrane as a helical span at residues 333–353 (RTLHLVGLGGMAVCAAVMTIA). Residues 354 to 362 (LALKEKWIR) lie on the Extracellular side of the membrane. A helical transmembrane segment spans residues 363–388 (YISIVATFGFVALFEIGPGPIPWFIV). D-glucose is bound by residues Glu-377 and Trp-385. Residues 389–398 (AELFSQGPRP) lie on the Cytoplasmic side of the membrane. Residues 399-419 (AAMAVAGCSNWTSNFLVGMLF) traverse the membrane as a helical segment. The Extracellular portion of the chain corresponds to 420–428 (PYAEKLCGP). A helical membrane pass occupies residues 429–449 (YVFLIFLVFLLIFFIFTYFKV). Residues 450–496 (PETKGRTFEDISRGFEEQVETSSPSSPPIEKNPMVEMNSIEPDKEVA) are Cytoplasmic-facing. A disordered region spans residues 464–496 (FEEQVETSSPSSPPIEKNPMVEMNSIEPDKEVA).

The protein belongs to the major facilitator superfamily. Sugar transporter (TC 2.A.1.1) family. Glucose transporter subfamily.

It localises to the cell membrane. Its subcellular location is the perikaryon. The protein localises to the cell projection. It catalyses the reaction D-glucose(out) = D-glucose(in). The catalysed reaction is D-galactose(in) = D-galactose(out). Deoxyglucose transport is inhibited by D-glucose, D-galactose and maltose. Galactose transport is inhibited by D-glucose and maltose. Its function is as follows. Facilitative glucose transporter. Can also mediate the uptake of various other monosaccharides across the cell membrane. Mediates the uptake of glucose, 2-deoxyglucose, galactose, mannose, xylose and fucose, and probably also dehydroascorbate. Does not mediate fructose transport. Required for mesendoderm differentiation. The polypeptide is Solute carrier family 2, facilitated glucose transporter member 3 (Gallus gallus (Chicken)).